A 1357-amino-acid polypeptide reads, in one-letter code: DNA-directed RNA polymerase subunit beta (1357 aa).

This sequence belongs to the RNA polymerase beta chain family. As to quaternary structure, the RNAP catalytic core consists of 2 alpha, 1 beta, 1 beta' and 1 omega subunit. When a sigma factor is associated with the core the holoenzyme is formed, which can initiate transcription.

The enzyme catalyses RNA(n) + a ribonucleoside 5'-triphosphate = RNA(n+1) + diphosphate. In terms of biological role, DNA-dependent RNA polymerase catalyzes the transcription of DNA into RNA using the four ribonucleoside triphosphates as substrates. The protein is DNA-directed RNA polymerase subunit beta of Neorickettsia sennetsu (Ehrlichia sennetsu).